The primary structure comprises 155 residues: UPF0178 protein RHE_CH02229 (155 aa).

This sequence belongs to the UPF0178 family.

This is UPF0178 protein RHE_CH02229 from Rhizobium etli (strain ATCC 51251 / DSM 11541 / JCM 21823 / NBRC 15573 / CFN 42).